Consider the following 346-residue polypeptide: tRNA N6-adenosine threonylcarbamoyltransferase (346 aa).

Fe cation contacts are provided by H111 and H115. Residues 134 to 138 (LVSGG), D167, G180, and N279 each bind substrate. D307 is a binding site for Fe cation.

This sequence belongs to the KAE1 / TsaD family. It depends on Fe(2+) as a cofactor.

The protein localises to the cytoplasm. The enzyme catalyses L-threonylcarbamoyladenylate + adenosine(37) in tRNA = N(6)-L-threonylcarbamoyladenosine(37) in tRNA + AMP + H(+). Its function is as follows. Required for the formation of a threonylcarbamoyl group on adenosine at position 37 (t(6)A37) in tRNAs that read codons beginning with adenine. Is involved in the transfer of the threonylcarbamoyl moiety of threonylcarbamoyl-AMP (TC-AMP) to the N6 group of A37, together with TsaE and TsaB. TsaD likely plays a direct catalytic role in this reaction. This is tRNA N6-adenosine threonylcarbamoyltransferase from Burkholderia cenocepacia (strain HI2424).